Here is a 356-residue protein sequence, read N- to C-terminus: Hyaluronan and proteoglycan link protein 1 (356 aa).

A propeptide spanning residues 1–9 (MRSLLLLVL) is cleaved from the precursor. Positions 40–154 (PRLLVEAEQA…EGLEDDTAVV (115 aa)) constitute an Ig-like V-type domain. N-linked (GlcNAc...) asparagine glycosylation is present at N58. 5 cysteine pairs are disulfide-bonded: C63/C141, C183/C254, C207/C228, C281/C351, and C306/C327. Link domains follow at residues 161–256 (VVFP…FCFT) and 261–353 (GRFY…YCFR).

The protein belongs to the HAPLN family. Ubiquitously expressed.

Its subcellular location is the secreted. It localises to the extracellular space. It is found in the extracellular matrix. Its function is as follows. Stabilizes the aggregates of proteoglycan monomers with hyaluronic acid in the extracellular cartilage matrix. The protein is Hyaluronan and proteoglycan link protein 1 (Hapln1) of Mus musculus (Mouse).